Reading from the N-terminus, the 143-residue chain is Peptidyl-prolyl cis-trans isomerase FKBP15-3 (143 aa).

Residues 56–143 (GKRVSVHYTG…VFDVELLNVK (88 aa)) enclose the PPIase FKBP-type domain.

This sequence belongs to the FKBP-type PPIase family.

The enzyme catalyses [protein]-peptidylproline (omega=180) = [protein]-peptidylproline (omega=0). PPIases accelerate the folding of proteins. It catalyzes the cis-trans isomerization of proline imidic peptide bonds in oligopeptides. The chain is Peptidyl-prolyl cis-trans isomerase FKBP15-3 (FKBP15-3) from Arabidopsis thaliana (Mouse-ear cress).